The chain runs to 332 residues: uncharacterized protein (332 aa).

Positions Met1–Gly26 are cleaved as a signal peptide.

The protein resides in the endoplasmic reticulum. This is an uncharacterized protein from Schizosaccharomyces pombe (strain 972 / ATCC 24843) (Fission yeast).